The chain runs to 426 residues: Enolase (426 aa).

Position 163 (Gln-163) interacts with (2R)-2-phosphoglycerate. The active-site Proton donor is the Glu-205. Residues Asp-242, Glu-283, and Asp-310 each coordinate Mg(2+). (2R)-2-phosphoglycerate contacts are provided by Lys-335, Arg-364, Ser-365, and Lys-386. Lys-335 (proton acceptor) is an active-site residue.

This sequence belongs to the enolase family. The cofactor is Mg(2+).

The protein resides in the cytoplasm. Its subcellular location is the secreted. It is found in the cell surface. The catalysed reaction is (2R)-2-phosphoglycerate = phosphoenolpyruvate + H2O. Its pathway is carbohydrate degradation; glycolysis; pyruvate from D-glyceraldehyde 3-phosphate: step 4/5. Its function is as follows. Catalyzes the reversible conversion of 2-phosphoglycerate (2-PG) into phosphoenolpyruvate (PEP). It is essential for the degradation of carbohydrates via glycolysis. The protein is Enolase of Clavibacter sepedonicus (Clavibacter michiganensis subsp. sepedonicus).